Here is a 251-residue protein sequence, read N- to C-terminus: Flap endonuclease Xni (251 aa).

Asp104 contacts Mg(2+). Residues 160 to 249 (VLPRQLPDYW…IDGNLQQLRL (90 aa)) enclose the 5'-3' exonuclease domain. K(+) is bound by residues Leu171, Ala172, Pro180, Val182, and Ile185. Residues 184-189 (GIGPKS) are interaction with DNA.

This sequence belongs to the Xni family. It depends on Mg(2+) as a cofactor. K(+) serves as cofactor.

Has flap endonuclease activity. During DNA replication, flap endonucleases cleave the 5'-overhanging flap structure that is generated by displacement synthesis when DNA polymerase encounters the 5'-end of a downstream Okazaki fragment. The polypeptide is Flap endonuclease Xni (Salmonella dublin (strain CT_02021853)).